We begin with the raw amino-acid sequence, 152 residues long: Large ribosomal subunit protein uL30 (152 aa).

Belongs to the universal ribosomal protein uL30 family. In terms of assembly, part of the 50S ribosomal subunit.

This Methanobrevibacter smithii (strain ATCC 35061 / DSM 861 / OCM 144 / PS) protein is Large ribosomal subunit protein uL30.